The primary structure comprises 422 residues: Serine--tRNA ligase (422 aa).

227–229 (TSE) contacts L-serine. ATP contacts are provided by residues 258–260 (RRE) and V274. E281 lines the L-serine pocket. Residue 345–348 (ELTS) coordinates ATP. An L-serine-binding site is contributed by T380.

The protein belongs to the class-II aminoacyl-tRNA synthetase family. Type-1 seryl-tRNA synthetase subfamily. Homodimer. The tRNA molecule binds across the dimer.

It is found in the cytoplasm. It catalyses the reaction tRNA(Ser) + L-serine + ATP = L-seryl-tRNA(Ser) + AMP + diphosphate + H(+). The catalysed reaction is tRNA(Sec) + L-serine + ATP = L-seryl-tRNA(Sec) + AMP + diphosphate + H(+). The protein operates within aminoacyl-tRNA biosynthesis; selenocysteinyl-tRNA(Sec) biosynthesis; L-seryl-tRNA(Sec) from L-serine and tRNA(Sec): step 1/1. Functionally, catalyzes the attachment of serine to tRNA(Ser). Is also able to aminoacylate tRNA(Sec) with serine, to form the misacylated tRNA L-seryl-tRNA(Sec), which will be further converted into selenocysteinyl-tRNA(Sec). The polypeptide is Serine--tRNA ligase (Thermobifida fusca (strain YX)).